The following is a 75-amino-acid chain: Small ribosomal subunit protein bS21 (75 aa).

Belongs to the bacterial ribosomal protein bS21 family.

The sequence is that of Small ribosomal subunit protein bS21 from Brucella abortus (strain S19).